We begin with the raw amino-acid sequence, 492 residues long: GMP reductase (492 aa).

NADP(+) is bound by residues 30–31 (SR) and arginine 78. 2 CBS domains span residues 99-162 (LIED…LVET) and 164-223 (MTPV…RNAT). Residues 260–262 (DIA) and 313–314 (VG) each bind NADP(+). K(+) is bound by residues glycine 314, glycine 316, and cysteine 319. The active-site Thioimidate intermediate is the cysteine 319. Threonine 321 (proton donor/acceptor) is an active-site residue. Arginine 322 provides a ligand contact to K(+). Residues 352-354 (DGG), 375-376 (GN), and 401-403 (GMA) each bind GMP. NADP(+) is bound by residues methionine 402 and 454–457 (SGIS). The Microbody targeting signal signature appears at 490-492 (SKL).

Belongs to the IMPDH/GMPR family. GuaC type 1 subfamily. In terms of assembly, homotetramer.

The protein localises to the glycosome. It carries out the reaction IMP + NH4(+) + NADP(+) = GMP + NADPH + 2 H(+). Activated by GTP and inhibited by XMP and the IMP analogs allopurinol nucleotide and thiopurinol nucleotide. Its function is as follows. Catalyzes the irreversible NADPH-dependent deamination of GMP to IMP. It functions in the conversion of nucleobase, nucleoside and nucleotide derivatives of G to A nucleotides, and in maintaining the intracellular balance of A and G nucleotides. The polypeptide is GMP reductase (Leishmania donovani).